A 193-amino-acid chain; its full sequence is Probable thymidylate kinase (193 aa).

7–14 (GIDGAGKT) lines the ATP pocket.

This sequence belongs to the thymidylate kinase family.

It carries out the reaction dTMP + ATP = dTDP + ADP. This is Probable thymidylate kinase (tmk) from Thermoplasma acidophilum (strain ATCC 25905 / DSM 1728 / JCM 9062 / NBRC 15155 / AMRC-C165).